The following is a 1016-amino-acid chain: Primary septum glucan endo-1,3-beta-D-glucosidase (1016 aa).

Positions 1–20 (MSSYLRSFIFGLLTISLAQC) are cleaved as a signal peptide. Asn-37 carries N-linked (GlcNAc...) asparagine glycosylation. A beta-sandwich subdomain region spans residues 45-272 (TNVFDSVVDT…NGYIQIAKIP (228 aa)). Residues 45 to 741 (TNVFDSVVDT…AYAAGLWAND (697 aa)) form the GH81 domain. The tract at residues 273–364 (LGDGTAEALY…AGNSITFAEA (92 aa)) is alpha/beta subdomain. Positions 379–741 (GQIGYSEEAL…AYAAGLWAND (363 aa)) are (alpha/beta)6 barrel subdomain. Asp-492 is an active-site residue. Residues His-496, Asp-567, Glu-569, Glu-573, and Tyr-650 each coordinate (1,3-beta-D-glucosyl)n. Active-site residues include Glu-569 and Glu-573. Residues 748–1016 (SSSSTTTTST…GCSNGALVAA (269 aa)) are required for catalytic activity against insoluble beta-glucan and to restrict localization of the enzyme to the cell septum. A disordered region spans residues 844 to 872 (SSTTSSITPTPTTTSSITPTPTTTSTTTT).

Belongs to the glycosyl hydrolase 81 family.

It localises to the cell septum. The catalysed reaction is Hydrolysis of (1-&gt;3)-beta-D-glucosidic linkages in (1-&gt;3)-beta-D-glucans.. Its function is as follows. Cleaves internal linkages in 1,3-beta-glucan. Has a role in cell separation where it is required for the degradation of the primary septum after completion of cytokinesis. In Schizosaccharomyces pombe (strain 972 / ATCC 24843) (Fission yeast), this protein is Primary septum glucan endo-1,3-beta-D-glucosidase.